Here is a 247-residue protein sequence, read N- to C-terminus: Granulin (247 aa).

This sequence belongs to the polyhedrin family.

In terms of biological role, component of the virus occlusion bodies, which are large proteinaceous structures, that protect the virus from the outside environment for extended periods until they are ingested by insect larvae. The chain is Granulin from Agrotis segetum granulosis virus (AsGV).